Consider the following 301-residue polypeptide: Possible hemolysin C (301 aa).

CBS domains are found at residues 79–141 (MVPR…NFRL) and 144–201 (LIRK…IDDE).

This sequence belongs to the UPF0053 family. Hemolysin C subfamily.

The sequence is that of Possible hemolysin C (tlyC) from Rickettsia bellii (strain RML369-C).